Here is a 419-residue protein sequence, read N- to C-terminus: MKVYLVGGAIRNKFLNLPVQDRDWVVVGATPEILLSLKFKQVGKGFPVFLHPYSKEEYSLARVDRKIGVGHTGFSFDYSNKVTLKEDLMRRDLTINAIAQDNNGNYIDPFKGIRDIKNRILRHVSPAFSEDPLRVLRIARFCALFHHLGFRIATETMKIMSIVVKNNELLNLTRDRVWKETEKAFNTDNPHVYFQVLKNCNALSVIFPEINLVYQRQYYCIDNMYHNFYDTFDIFMGLAELSKISRDIDIRFSYLFFCINRMLFIDTSSYILVINQKELVRYFKALCQRFCIPAYIKNVSICFSRFYKFLSVIHYQSSKDIIMFFYIIDAWRKPYMIRKLSVLNNFCVSRNAYFKNITCQQYPRNFLKYAFNVANKISIKPILKMGFSGLQIKYELIRLRINAIENWRQNITVYKKCCF.

Positions 8 and 11 each coordinate ATP. CTP contacts are provided by G8 and R11. Mg(2+)-binding residues include D21 and D23. The ATP site is built by R91, R137, and R140. CTP-binding residues include R91, R137, and R140.

This sequence belongs to the tRNA nucleotidyltransferase/poly(A) polymerase family. Bacterial CCA-adding enzyme type 2 subfamily. Mg(2+) is required as a cofactor.

The catalysed reaction is a tRNA precursor + 2 CTP + ATP = a tRNA with a 3' CCA end + 3 diphosphate. It carries out the reaction a tRNA with a 3' CCA end + 2 CTP + ATP = a tRNA with a 3' CCACCA end + 3 diphosphate. Catalyzes the addition and repair of the essential 3'-terminal CCA sequence in tRNAs without using a nucleic acid template. Adds these three nucleotides in the order of C, C, and A to the tRNA nucleotide-73, using CTP and ATP as substrates and producing inorganic pyrophosphate. tRNA 3'-terminal CCA addition is required both for tRNA processing and repair. Also involved in tRNA surveillance by mediating tandem CCA addition to generate a CCACCA at the 3' terminus of unstable tRNAs. While stable tRNAs receive only 3'-terminal CCA, unstable tRNAs are marked with CCACCA and rapidly degraded. This is CCA-adding enzyme from Buchnera aphidicola subsp. Baizongia pistaciae (strain Bp).